Here is a 523-residue protein sequence, read N- to C-terminus: Cyclin-dependent kinase 17 (523 aa).

Position 9 is a phosphoserine (Ser-9). The disordered stretch occupies residues 31 to 55; the sequence is IEESSSKDNEPIVKNGRPPTSHSMH. Phosphoserine is present on residues Ser-80, Ser-92, and Ser-105. A disordered region spans residues 103–123; it reads MGSDGESDQASGTSSDEVQSP. The span at 110–123 shows a compositional bias: polar residues; the sequence is DQASGTSSDEVQSP. Phosphoserine is present on residues Ser-137, Ser-146, Ser-165, and Ser-180. Residues 192–473 form the Protein kinase domain; the sequence is YIKLEKLGEG…AEEAMKHVYF (282 aa). ATP is bound by residues 198–206 and Lys-221; that span reads LGEGTYATV. Residue Asp-313 is the Proton acceptor of the active site.

The protein belongs to the protein kinase superfamily. CMGC Ser/Thr protein kinase family. CDC2/CDKX subfamily. In terms of assembly, found in a complex containing CABLES1, CDK16 and TDRD7. Interacts with TDRD7. In terms of tissue distribution, brain specific. Within the brain it is concentrated in the neuronal layers of the hippocampus and olfactory bulb, which mostly consist of post-mitotic neurons.

The catalysed reaction is L-seryl-[protein] + ATP = O-phospho-L-seryl-[protein] + ADP + H(+). It carries out the reaction L-threonyl-[protein] + ATP = O-phospho-L-threonyl-[protein] + ADP + H(+). Its function is as follows. May play a role in terminally differentiated neurons. Has a Ser/Thr-phosphorylating activity for histone H1. The polypeptide is Cyclin-dependent kinase 17 (Cdk17) (Rattus norvegicus (Rat)).